A 463-amino-acid polypeptide reads, in one-letter code: Glycine--tRNA ligase (463 aa).

Positions 98 and 174 each coordinate substrate. Residues 206–208 (RNE), 216–221 (FRTREF), 290–291 (EL), and 334–337 (GADR) contribute to the ATP site. A substrate-binding site is contributed by 221-225 (FEQME). Position 330-334 (330-334 (EPSLG)) interacts with substrate.

The protein belongs to the class-II aminoacyl-tRNA synthetase family. As to quaternary structure, homodimer.

It localises to the cytoplasm. It catalyses the reaction tRNA(Gly) + glycine + ATP = glycyl-tRNA(Gly) + AMP + diphosphate. Functionally, catalyzes the attachment of glycine to tRNA(Gly). This Staphylococcus saprophyticus subsp. saprophyticus (strain ATCC 15305 / DSM 20229 / NCIMB 8711 / NCTC 7292 / S-41) protein is Glycine--tRNA ligase.